We begin with the raw amino-acid sequence, 397 residues long: Ubiquitin-like modifier-activating enzyme 5 (397 aa).

5 residues coordinate ATP: Gly-76, Asp-97, Lys-120, Asn-143, and Asn-177. Zn(2+) is bound by residues Cys-219 and Cys-222. Cys-243 acts as the Glycyl thioester intermediate in catalysis. Positions 296 and 301 each coordinate Zn(2+). The short motif at 327–339 (IVHEDNDWGIELV) is the UFM1-interacting sequence (UIS) element. The interval 340 to 370 (SETTEDELKAASGPVPDLPVGITVAYTIPNK) is linker. Positions 382-397 (ESEESLEDLMAKMRNL) match the UFC1-binding sequence (UFC) motif.

This sequence belongs to the ubiquitin-activating E1 family. UBA5 subfamily. In terms of assembly, homodimer; homodimerization is required for UFM1 activation. Interacts (via UIS motif) with UFM1; binds UFM1 via a trans-binding mechanism in which UFM1 interacts with distinct sites in both subunits of the UBA5 homodimer. Interacts (via C-terminus) with UFC1.

The protein localises to the cytoplasm. It is found in the nucleus. The protein resides in the endoplasmic reticulum membrane. It localises to the golgi apparatus. Functionally, E1-like enzyme which specifically catalyzes the first step in ufmylation. Activates UFM1 by first adenylating its C-terminal glycine residue with ATP, and thereafter linking this residue to the side chain of a cysteine residue in E1, yielding a UFM1-E1 thioester and free AMP. Activates UFM1 via a trans-binding mechanism, in which UFM1 interacts with distinct sites in both subunits of the UBA5 homodimer. Trans-binding also promotes stabilization of the UBA5 homodimer, and enhances ATP-binding. Transfer of UFM1 from UBA5 to the E2-like enzyme UFC1 also takes place using a trans mechanism. Ufmylation plays a key role in various processes, such as ribosome recycling, response to DNA damage, interferon response or reticulophagy (also called ER-phagy). This is Ubiquitin-like modifier-activating enzyme 5 from Gallus gallus (Chicken).